The primary structure comprises 574 residues: NEDD4-binding protein 2-like 2 (574 aa).

4 disordered regions span residues 82 to 110 (HKEM…LAPA), 127 to 161 (YKPP…QKFN), 182 to 204 (ENEN…QTLS), and 542 to 574 (TQKS…TDDY). 2 stretches are compositionally biased toward basic and acidic residues: residues 129-141 (PPEK…RKNE) and 149-161 (DSKR…QKFN). Residues 162 to 196 (SKKLEIDTELSQFYKEIEELENENEASQGSCKEPE) are a coiled coil. The segment covering 563 to 574 (GSHSQVSITDDY) has biased composition (polar residues).

The sequence is that of NEDD4-binding protein 2-like 2 (N4bp2l2) from Rattus norvegicus (Rat).